Here is a 274-residue protein sequence, read N- to C-terminus: Ribosomal RNA small subunit methyltransferase A (274 aa).

S-adenosyl-L-methionine is bound by residues His-15, Leu-17, Gly-42, Glu-64, Asp-89, and Asn-109.

Belongs to the class I-like SAM-binding methyltransferase superfamily. rRNA adenine N(6)-methyltransferase family. RsmA subfamily.

The protein localises to the cytoplasm. It carries out the reaction adenosine(1518)/adenosine(1519) in 16S rRNA + 4 S-adenosyl-L-methionine = N(6)-dimethyladenosine(1518)/N(6)-dimethyladenosine(1519) in 16S rRNA + 4 S-adenosyl-L-homocysteine + 4 H(+). Specifically dimethylates two adjacent adenosines (A1518 and A1519) in the loop of a conserved hairpin near the 3'-end of 16S rRNA in the 30S particle. May play a critical role in biogenesis of 30S subunits. In Synechococcus sp. (strain CC9902), this protein is Ribosomal RNA small subunit methyltransferase A.